Here is a 567-residue protein sequence, read N- to C-terminus: Urease subunit alpha (567 aa).

Positions 134, 136, and 217 each coordinate Ni(2+). K217 is modified (N6-carboxylysine). Position 219 (H219) interacts with substrate. Ni(2+)-binding residues include H246 and H272. H320 functions as the Proton donor in the catalytic mechanism. D360 lines the Ni(2+) pocket.

The protein belongs to the metallo-dependent hydrolases superfamily. Urease alpha subunit family. In terms of assembly, heterotrimer of UreA (gamma), UreB (beta) and UreC (alpha) subunits. Three heterotrimers associate to form the active enzyme. Ni cation is required as a cofactor. In terms of processing, carboxylation allows a single lysine to coordinate two nickel ions.

Its subcellular location is the cytoplasm. It carries out the reaction urea + 2 H2O + H(+) = hydrogencarbonate + 2 NH4(+). It functions in the pathway nitrogen metabolism; urea degradation; CO(2) and NH(3) from urea (urease route): step 1/1. The chain is Urease subunit alpha from Pseudomonas putida (strain GB-1).